The primary structure comprises 178 residues: Protein GrpE (178 aa).

It belongs to the GrpE family. As to quaternary structure, homodimer.

It is found in the cytoplasm. Its function is as follows. Participates actively in the response to hyperosmotic and heat shock by preventing the aggregation of stress-denatured proteins, in association with DnaK and GrpE. It is the nucleotide exchange factor for DnaK and may function as a thermosensor. Unfolded proteins bind initially to DnaJ; upon interaction with the DnaJ-bound protein, DnaK hydrolyzes its bound ATP, resulting in the formation of a stable complex. GrpE releases ADP from DnaK; ATP binding to DnaK triggers the release of the substrate protein, thus completing the reaction cycle. Several rounds of ATP-dependent interactions between DnaJ, DnaK and GrpE are required for fully efficient folding. This chain is Protein GrpE, found in Rickettsia akari (strain Hartford).